The primary structure comprises 179 residues: NADH:FAD oxidoreductase (179 aa).

48 to 51 (TCSA) serves as a coordination point for FAD. Residue 54 to 57 (SVCD) participates in NAD(+) binding. FAD is bound by residues 65-71 (CINRKSY), Ala-99, 104-109 (VPMEER), and Ser-144. Residues His-145 and 166-169 (YHRR) contribute to the NAD(+) site. An FAD-binding site is contributed by Tyr-166.

It belongs to the non-flavoprotein flavin reductase family. Homodimer. The chlorophenol-4-monooxygenase is composed of an oxygenase component TftD and a reductase component TftC.

It catalyses the reaction FADH2 + NAD(+) = FAD + NADH + 2 H(+). Its pathway is xenobiotic degradation. In terms of biological role, reductase component of a two-component system that degrades 2,4,5-trichlorophenol. TftC provides the FADH(2) required by TftD. TftD oxidizes 2,4,5-trichlorophenol (2,4,5-TCP) to 2,5-dichloro-p-benzoquinone, which is chemically reduced to 2,5-dichloro-p-hydroquinone (2,5-DiCHQ). Then, TftD oxidizes the latter to 5-chloro-2-hydroxy-p-benzoquinone. The sequence is that of NADH:FAD oxidoreductase (tftC) from Burkholderia cepacia (Pseudomonas cepacia).